Consider the following 166-residue polypeptide: Crossover junction endodeoxyribonuclease RuvC (166 aa).

Active-site residues include Asp9, Glu70, and Asp144. Positions 9, 70, and 144 each coordinate Mg(2+).

Belongs to the RuvC family. Homodimer which binds Holliday junction (HJ) DNA. The HJ becomes 2-fold symmetrical on binding to RuvC with unstacked arms; it has a different conformation from HJ DNA in complex with RuvA. In the full resolvosome a probable DNA-RuvA(4)-RuvB(12)-RuvC(2) complex forms which resolves the HJ. Mg(2+) is required as a cofactor.

Its subcellular location is the cytoplasm. It carries out the reaction Endonucleolytic cleavage at a junction such as a reciprocal single-stranded crossover between two homologous DNA duplexes (Holliday junction).. In terms of biological role, the RuvA-RuvB-RuvC complex processes Holliday junction (HJ) DNA during genetic recombination and DNA repair. Endonuclease that resolves HJ intermediates. Cleaves cruciform DNA by making single-stranded nicks across the HJ at symmetrical positions within the homologous arms, yielding a 5'-phosphate and a 3'-hydroxyl group; requires a central core of homology in the junction. The consensus cleavage sequence is 5'-(A/T)TT(C/G)-3'. Cleavage occurs on the 3'-side of the TT dinucleotide at the point of strand exchange. HJ branch migration catalyzed by RuvA-RuvB allows RuvC to scan DNA until it finds its consensus sequence, where it cleaves and resolves the cruciform DNA. The polypeptide is Crossover junction endodeoxyribonuclease RuvC (Neorickettsia sennetsu (strain ATCC VR-367 / Miyayama) (Ehrlichia sennetsu)).